Reading from the N-terminus, the 856-residue chain is Serine/threonine-protein phosphatase 6 regulatory subunit 1 (856 aa).

The segment at 10-403 (SSHLDTLLEK…VFNNFLHAQV (394 aa)) is interaction with PPP6C. Residue S232 is modified to Phosphoserine. T524 is subject to Phosphothreonine. A phosphoserine mark is found at S529, S530, and S531. Positions 621–630 (DDEEEEEEEG) are enriched in acidic residues. 2 disordered regions span residues 621 to 770 (DDEE…KVAE) and 792 to 856 (RSAP…SGSQ). Phosphoserine is present on residues S633 and S636. Over residues 644–656 (QGSQPVRASQASQ) the composition is skewed to polar residues. Over residues 667–683 (DSEEEDEEEDEEEDEGA) the composition is skewed to acidic residues. A phosphoserine mark is found at S698 and S739. The span at 794 to 809 (APSSLDSATRDPSTSV) shows a compositional bias: polar residues. S826 carries the post-translational modification Phosphoserine. Residues 842–856 (PNGSTPGGPISSGSQ) are compositionally biased toward low complexity.

The protein belongs to the SAPS family. In terms of assembly, protein phosphatase 6 (PP6) holoenzyme is proposed to be a heterotrimeric complex formed of the catalytic subunit, a SAPS domain-containing subunit (PP6R) and an ankyrin repeat-domain containing regulatory subunit (ARS). Interacts with PPP6C and NFKBIE. Interacts with ANKRD28, ANKRD44 and ANKRD52. As to expression, ubiquitous with highest expression in lung, spleen and bladder.

The protein localises to the cytoplasm. Functionally, regulatory subunit of protein phosphatase 6 (PP6). May function as a scaffolding PP6 subunit. Involved in the PP6-mediated dephosphorylation of NFKBIE opposing its degradation in response to TNF-alpha. The protein is Serine/threonine-protein phosphatase 6 regulatory subunit 1 (Ppp6r1) of Mus musculus (Mouse).